Reading from the N-terminus, the 379-residue chain is Pathogen-associated molecular patterns-induced protein A70 (379 aa).

A helical membrane pass occupies residues 7 to 29; that stretch reads VASFFTPTTLFLLLNLMIGTIVV. Asn122 carries N-linked (GlcNAc...) asparagine glycosylation. Residues 133–154 are disordered; sequence TGSDPHSHSHSHLDLHPDPAPA. The segment covering 137 to 149 has biased composition (basic and acidic residues); that stretch reads PHSHSHSHLDLHP. Asn170 is a glycosylation site (N-linked (GlcNAc...) asparagine). Disordered regions lie at residues 216-238 and 256-347; these read PEED…LTRA and SDPD…DGVD. Polar residues predominate over residues 221–231; it reads PTGTGVNSQIN. Composition is skewed to basic and acidic residues over residues 256–285 and 322–335; these read SDPD…ESKK and SLER…RVER.

The protein localises to the membrane. This chain is Pathogen-associated molecular patterns-induced protein A70, found in Arabidopsis thaliana (Mouse-ear cress).